Consider the following 590-residue polypeptide: Putative sodium/calcium exchanger 6 (590 aa).

Residues 1 to 19 (MRIHFFAFLIILSLVGCDG) form the signal peptide. 11 helical membrane passes run 97–117 (IILI…VSSA), 139–159 (VAGV…GAIA), 173–193 (LGEL…VTIF), 208–228 (IAFY…YDHV), 230–250 (IWMP…VILS), 368–388 (PITL…IQVC), 397–417 (PGLW…VLFF), 440–460 (IAWI…LGVV), 499–519 (AAAI…PFTI), 535–555 (YRLL…AMFA), and 568–588 (LVFI…DILV).

It belongs to the Ca(2+):cation antiporter (CaCA) (TC 2.A.19) family.

The protein localises to the membrane. The sequence is that of Putative sodium/calcium exchanger 6 (ncx-6) from Caenorhabditis elegans.